We begin with the raw amino-acid sequence, 1038 residues long: Isoleucine--tRNA ligase (1038 aa).

Positions 47–57 (PFATGLPHYGH) match the 'HIGH' region motif. Positions 591 to 595 (KMSKR) match the 'KMSKS' region motif. K594 contributes to the ATP binding site.

This sequence belongs to the class-I aminoacyl-tRNA synthetase family. IleS type 2 subfamily. In terms of assembly, monomer. Zn(2+) is required as a cofactor.

The protein localises to the cytoplasm. The catalysed reaction is tRNA(Ile) + L-isoleucine + ATP = L-isoleucyl-tRNA(Ile) + AMP + diphosphate. Catalyzes the attachment of isoleucine to tRNA(Ile). As IleRS can inadvertently accommodate and process structurally similar amino acids such as valine, to avoid such errors it has two additional distinct tRNA(Ile)-dependent editing activities. One activity is designated as 'pretransfer' editing and involves the hydrolysis of activated Val-AMP. The other activity is designated 'posttransfer' editing and involves deacylation of mischarged Val-tRNA(Ile). The sequence is that of Isoleucine--tRNA ligase from Protochlamydia amoebophila (strain UWE25).